The following is a 600-amino-acid chain: MLRTHLSGELRKENAGQSVTLTGWVARRRDHGGVIFIDLRDRSGIAQVVFRNEDVAERAHALRSEFVLQVTGVVEKRPEGSENPNLASGDVEVSVTDFTVLNESAPLPFQIEDASSAGEVGEETRLKYRYLDLRRPVQANALRLRSAANKAARTVLDSHDFTEIETPTLTRSTPEGARDFLVPARLKPGTFYALPQSPQLFKQLLQVAGMERYYQIARCYRDEDFRADRQPEFTQLDVEMSFVDQEDVIALAEEILTEVWKLIGYEISTPIPRITYADAMRLYGSDKPDLRFDIQITECTDFFADTTFRVFKNEYVGAVVMKGGASQPRRQLDAWQEWAKQRGAKGLAYILVGEDGELGGPVAKNITDAEREGIAAHVGAEPGDCIFFAAGDTRSSRALLGAARDEIARKLDLIRDGEWSFVWVVDAPMFESAADATASGDVALGNSKWTAVHHAFTSPKPEFLDTFDENPGEALAYAYDIVCNGNEIGGGSIRIHQRDVQERVFKVMGISEEEARDKFGFLLDAFAFGAPPHGGIAFGWDRIVSLLGGFDSIRDVIAFPKSGGGVDPLTDAPAPITPLQRKESGIDAKPKAAENKPEEK.

Position 175 (glutamate 175) interacts with L-aspartate. The tract at residues 199 to 202 (QLFK) is aspartate. Arginine 221 is an L-aspartate binding site. Residues 221–223 (RDE) and glutamine 230 contribute to the ATP site. Position 453 (histidine 453) interacts with L-aspartate. Glutamate 487 is an ATP binding site. Arginine 494 contacts L-aspartate. Residue 539 to 542 (GWDR) coordinates ATP. The tract at residues 564-600 (GGVDPLTDAPAPITPLQRKESGIDAKPKAAENKPEEK) is disordered. Residues 580–600 (QRKESGIDAKPKAAENKPEEK) are compositionally biased toward basic and acidic residues.

This sequence belongs to the class-II aminoacyl-tRNA synthetase family. Type 1 subfamily. Homodimer.

It localises to the cytoplasm. The catalysed reaction is tRNA(Asx) + L-aspartate + ATP = L-aspartyl-tRNA(Asx) + AMP + diphosphate. Aspartyl-tRNA synthetase with relaxed tRNA specificity since it is able to aspartylate not only its cognate tRNA(Asp) but also tRNA(Asn). Reaction proceeds in two steps: L-aspartate is first activated by ATP to form Asp-AMP and then transferred to the acceptor end of tRNA(Asp/Asn). The sequence is that of Aspartate--tRNA(Asp/Asn) ligase from Corynebacterium efficiens (strain DSM 44549 / YS-314 / AJ 12310 / JCM 11189 / NBRC 100395).